The sequence spans 351 residues: Ion-translocating oxidoreductase complex subunit D (351 aa).

4 helical membrane-spanning segments follow: residues 20–40 (IMLW…YFFG), 44–64 (LIQV…TLSL), 89–109 (LPPL…IIIA), and 123–143 (PAMI…TSWL). Threonine 187 carries the post-translational modification FMN phosphoryl threonine. The next 5 membrane-spanning stretches (helical) occupy residues 215 to 235 (LSGI…LFLL), 244 to 264 (IPVS…IIAP), 267 to 287 (FAQP…FFIA), 301 to 321 (LIFG…GGYP), and 322 to 342 (DGVA…DYYT).

Belongs to the NqrB/RnfD family. As to quaternary structure, the complex is composed of six subunits: RnfA, RnfB, RnfC, RnfD, RnfE and RnfG. The cofactor is FMN.

Its subcellular location is the cell inner membrane. Functionally, part of a membrane-bound complex that couples electron transfer with translocation of ions across the membrane. The protein is Ion-translocating oxidoreductase complex subunit D of Pectobacterium atrosepticum (strain SCRI 1043 / ATCC BAA-672) (Erwinia carotovora subsp. atroseptica).